Consider the following 84-residue polypeptide: Small ribosomal subunit protein bS16 (84 aa).

This sequence belongs to the bacterial ribosomal protein bS16 family.

In Cupriavidus necator (strain ATCC 17699 / DSM 428 / KCTC 22496 / NCIMB 10442 / H16 / Stanier 337) (Ralstonia eutropha), this protein is Small ribosomal subunit protein bS16.